A 64-amino-acid polypeptide reads, in one-letter code: Large ribosomal subunit protein eL37 (64 aa).

Cysteine 20, cysteine 23, cysteine 35, and cysteine 38 together coordinate Zn(2+). A C4-type zinc finger spans residues 20–38; that stretch reads CRRCGRRAYHVRKKACAAC.

It belongs to the eukaryotic ribosomal protein eL37 family. It depends on Zn(2+) as a cofactor.

In terms of biological role, binds to the 23S rRNA. The sequence is that of Large ribosomal subunit protein eL37 from Methanococcus vannielii (strain ATCC 35089 / DSM 1224 / JCM 13029 / OCM 148 / SB).